The sequence spans 779 residues: Anion/proton exchange transporter GEF1 (779 aa).

At 1-75 (MPTTYVPINQ…REVIWDRAKT (75 aa)) the chain is on the cytoplasmic side. A helical transmembrane segment spans residues 76-96 (FITLSSTAIVIGCIAGFLQVF). Over 97–154 (TETLVNWKTGHCQRNWLLNKSFCCNGVVNEVTSTSNLLLKRQEFECEAQGLWIAWKGH) the chain is Lumenal. The chain crosses the membrane as a helical span at residues 155-175 (VSPFIIFMLLSVLFALISTLL). Over 176-177 (VK) the chain is Cytoplasmic. A helical transmembrane segment spans residues 178–198 (YVAPMATGSGISEIKVWVSGF). Topologically, residues 199–203 (EYNKE) are lumenal. The chain crosses the membrane as a helical span at residues 204-224 (FLGFLTLVIKSVALPLAISSG). Topologically, residues 225–264 (LSVGKEGPSVHYATCCGYLLTKWLLRDTLTYSSQYEYITA) are cytoplasmic. A helical membrane pass occupies residues 265–285 (ASGAGVAVAFGAPIGGVLFGL). The Lumenal portion of the chain corresponds to 286 to 296 (EEIASANRFNS). Residues 297-319 (STLWKSYYVALVAITTLKYIDPF) form a helical membrane-spanning segment. Topologically, residues 320–336 (RNGRVILFNVTYDRDWK) are cytoplasmic. Residues 337-357 (VQEIPIFIALGIFGGLYGKYI) traverse the membrane as a helical segment. Residues 358–369 (SKWNINFIHFRK) are Lumenal-facing. Residues 370-390 (MYLSSWPVQEVLFLATLTALI) traverse the membrane as a helical segment. Residues 391 to 436 (SYFNEFLKLDMTESMGILFHECVKNDNTSTFSHRLCQLDENTHAFE) are Cytoplasmic-facing. The helical transmembrane segment at 437–457 (FLKIFTSLCFATVIRALLVVV) threads the bilayer. Residues 458-465 (SYGARVPA) are Lumenal-facing. A helical transmembrane segment spans residues 466–486 (GIFVPSMAVGATFGRAVSLLV). At 487 to 500 (ERFISGPSVITPGA) the chain is on the cytoplasmic side. A helical membrane pass occupies residues 501–523 (YAFLGAAATLSGITNLTLTVVVI). The Lumenal portion of the chain corresponds to 524–529 (MFELTG). Residues 530–552 (AFMYIIPLMIVVAITRIILSTSG) traverse the membrane as a helical segment. Residues 553-779 (ISGGIADQMI…FTTNRNGNVI (227 aa)) lie on the Cytoplasmic side of the membrane. CBS domains lie at 591–659 (MSSK…VNST) and 688–744 (MNES…YREV).

The protein belongs to the chloride channel (TC 2.A.49) family. In terms of assembly, homodimer. Interacts with GET3. In terms of processing, proteolytically processed in the secretory pathway by protease KEX2 within the first extracellular loop. However, both the N- and C-terminal products of the cleavage reaction are required for assembly of a functional channel.

It localises to the golgi apparatus membrane. Its subcellular location is the endosome membrane. It is found in the prevacuolar compartment membrane. Its function is as follows. Anion/proton exchange transporter involved in iron and copper cation homeostasis. Involved in intracellular iron metabolism during growth on fermentable and non fermentable carbon sources. Required for proper copper-loading and maturation of multicopper oxidase FET3. Important for adjusting intracellular compartment pH to more alkaline pH under iron limitation. May also transport chloride ions through the plasma membrane. The protein is Anion/proton exchange transporter GEF1 (GEF1) of Saccharomyces cerevisiae (strain ATCC 204508 / S288c) (Baker's yeast).